Consider the following 56-residue polypeptide: Large ribosomal subunit protein bL32 (56 aa).

Residues 1 to 36 (MAVQQNKKSRSKRGMRRSHDALSTAQLSVDATSGEV) are disordered. A compositionally biased stretch (basic residues) spans 7 to 16 (KKSRSKRGMR). The segment covering 21-31 (ALSTAQLSVDA) has biased composition (polar residues).

It belongs to the bacterial ribosomal protein bL32 family.

The sequence is that of Large ribosomal subunit protein bL32 from Shewanella oneidensis (strain ATCC 700550 / JCM 31522 / CIP 106686 / LMG 19005 / NCIMB 14063 / MR-1).